An 855-amino-acid chain; its full sequence is DNA mismatch repair protein MutS (855 aa).

Position 617 to 624 (617 to 624) interacts with ATP; the sequence is GPNMGGKS.

Belongs to the DNA mismatch repair MutS family.

Its function is as follows. This protein is involved in the repair of mismatches in DNA. It is possible that it carries out the mismatch recognition step. This protein has a weak ATPase activity. The chain is DNA mismatch repair protein MutS from Baumannia cicadellinicola subsp. Homalodisca coagulata.